An 838-amino-acid polypeptide reads, in one-letter code: Transient receptor potential cation channel subfamily V member 1 (838 aa).

Disordered regions lie at residues 1 to 63 (MEQR…PLDC) and 86 to 109 (RPGDGPASVRPSSQDSVSAGEKPP). At 1 to 432 (MEQRASLDSE…QDKWDRFVKR (432 aa)) the chain is on the cytoplasmic side. Residues 110 to 138 (RLYDRRSIFDAVAQSNCQELESLLPFLQR) form an ANK 1 repeat. An ATP-binding site is contributed by Arg115. Position 116 is a phosphoserine; by PKA and PKD (Ser116). Thr144 is modified (phosphothreonine; by PKA; in vitro). The stretch at 153-185 (TGKTCLLKAMLNLHNGQNDTIALLLDVARKTDS) is one ANK 2 repeat. ATP is bound by residues Lys155, Lys160, Asn164, 199 to 202 (YKGQ), and 210 to 211 (ER). ANK repeat units lie at residues 203-228 (TALHIAIERRNMTLVTLLVENGADVQ), 249-276 (ELPLSLAACTNQLAIVKFLLQNSWQPAD), 285-321 (NTVLHALVEVADNTVDNTKFVTSMYNEILILGAKLHP), and 335-358 (TPLALAASSGKIGVLAYILQREIH). Thr370 bears the Phosphothreonine; by PKA; in vitro mark. Residues 393–415 (NSVLEVIAYSSSETPNRHDMLLV) form an ANK 7 repeat. The chain crosses the membrane as a helical span at residues 433–453 (IFYFNFFVYCLYMIIFTAAAY). Residues 454-471 (YRPVEGLPPYKLKNTVGD) lie on the Extracellular side of the membrane. A helical transmembrane segment spans residues 472-497 (YFRVTGEILSVSGGVYFFFRGIQYFL). Residues 498-510 (QRRPSLKSLFVDS) lie on the Cytoplasmic side of the membrane. Phosphoserine; by PKC/PRKCE is present on Ser502. 511–512 (YS) contributes to the resiniferatoxin binding site. The helical transmembrane segment at 511 to 531 (YSEILFFVQSLFMLVSVVLYF) threads the bilayer. At 532–535 (SQRK) the chain is on the extracellular side. A helical membrane pass occupies residues 536-556 (EYVASMVFSLAMGWTNMLYYT). Positions 550 and 557 each coordinate resiniferatoxin. Residues 557–571 (RGFQQMGIYAVMIEK) are Cytoplasmic-facing. Residues 572 to 599 (MILRDLCRFMFVYLVFLFGFSTAVVTLI) form a helical membrane-spanning segment. Residues 600–626 (EDGKNNSLPMESTPHKCRGSACKPGNS) are Extracellular-facing. A glycan (N-linked (GlcNAc...) asparagine) is linked at Asn604. An intramembrane region (pore-forming) is located at residues 627–649 (YNSLYSTCLELFKFTIGMGDLEF). Gly643 lines the Na(+) pocket. Residues 643 to 646 (GMGD) carry the Selectivity filter motif. Asp646 is a Ca(2+) binding site. Over 650–657 (TENYDFKA) the chain is Extracellular. A helical membrane pass occupies residues 658 to 686 (VFIILLLAYVILTYILLLNMLIALMGETV). The segment at 684 to 712 (ETVNKIAQESKNIWKLQRAITILDTEKSF) is AD. Residues 687–838 (NKIAQESKNI…FKDSMVPGEK (152 aa)) lie on the Cytoplasmic side of the membrane. Thr704 is subject to Phosphothreonine. The tract at residues 767–801 (EGVKRTLSFSLRSGRVSGRNWKNFALVPLLRDAST) is interaction with calmodulin. At Ser774 the chain carries Phosphoserine; by PKA; in vitro. Positions 777–792 (LRSGRVSGRNWKNFAL) are required for PIP2-mediated channel inhibition. Ser800 is subject to Phosphoserine; by PKC/PRKCE and PKC/PRKCZ. Phosphoserine; by PKA; in vitro is present on Ser820.

It belongs to the transient receptor (TC 1.A.4) family. TrpV subfamily. TRPV1 sub-subfamily. In terms of assembly, homotetramer. Interacts with PIRT. May also form a heteromeric channel with TRPV3. Interacts with CALM, PRKCM and CSK. Interacts with PRKCG and NTRK1, probably by forming a trimeric complex. Interacts with the Scolopendra mutilans RhTx toxin. Interacts with the spider Tau-theraphotoxin-Hs1a. Interacts with TMEM100. Interacts with PACS2. Post-translationally, phosphorylation by PKA reverses capsaicin-induced dephosphorylation at multiple sites, probably including Ser-116 as a major phosphorylation site. Phosphorylation by CAMKII seems to regulate binding to vanilloids. Phosphorylated and modulated by PRKCE, PRKCM and probably PRKCZ. Dephosphorylation by calcineurin seems to lead to receptor desensitization and phosphorylation by CAMKII recovers activity. As to expression, predominantly expressed in trigeminal and dorsal root sensory ganglia. Expressed also in hippocampus, cortex, cerebellum, olfactory bulb, mesencephalon and hindbrain. High expression in the cell bodies and dendrites of neurons in the hippocampus and in the cortex. In the brain detected also in astrocytes and pericytes (at protein level). Isoform 1 and isoform 3 are expressed in brain and peripheral blood mononuclear cells.

The protein resides in the postsynaptic cell membrane. Its subcellular location is the cell projection. It localises to the dendritic spine membrane. The protein localises to the cell membrane. It carries out the reaction Ca(2+)(in) = Ca(2+)(out). The enzyme catalyses Mg(2+)(in) = Mg(2+)(out). It catalyses the reaction Na(+)(in) = Na(+)(out). The catalysed reaction is K(+)(in) = K(+)(out). Channel activity is activated via the interaction with PIRT and phosphatidylinositol 4,5-bisphosphate (PIP2). Both PIRT and PIP2 are required to activate channel activity. The channel is sensitized by ATP binding. Repeated stimulation with capsaicin gives rise to progressively smaller responses, due to desensitization. This desensitization is triggered by the influx of calcium ions and is inhibited by elevated ATP levels. Ca(2+) and CALM displace ATP from its binding site and trigger a conformation change that leads to a closed, desensitized channel. Intracellular PIP2 inhibits desensitization. The double-knot toxin (DkTx) from the Chinese earth tiger tarantula activates the channel and traps it in an open conformation. The Scolopendra mutilans RhTx toxin potentiates the heat activation pathway mediated by this channel by binding to the charge-rich outer pore region (in an activated state). Its function is as follows. Non-selective calcium permeant cation channel involved in detection of noxious chemical and thermal stimuli. Seems to mediate proton influx and may be involved in intracellular acidosis in nociceptive neurons. Involved in mediation of inflammatory pain and hyperalgesia. Sensitized by a phosphatidylinositol second messenger system activated by receptor tyrosine kinases, which involves PKC isozymes and PCL. Activation by vanilloids, like capsaicin, and temperatures higher than 42 degrees Celsius. Upon activation, exhibits a time- and Ca(2+)-dependent outward rectification, followed by a long-lasting refractory state. Mild extracellular acidic pH (6.5) potentiates channel activation by noxious heat and vanilloids, whereas acidic conditions (pH &lt;6) directly activate the channel. Can be activated by endogenous compounds, including 12-hydroperoxytetraenoic acid and bradykinin. Acts as ionotropic endocannabinoid receptor with central neuromodulatory effects. Triggers a form of long-term depression (TRPV1-LTD) mediated by the endocannabinoid anandamine in the hippocampus and nucleus accumbens by affecting AMPA receptors endocytosis. Does not display channel activity in response to noxious chemical compounds, such as capsaicin and the vanilloid resiniferatoxin. Channel activity is not elicited by mildly acidic extracellular pH, and only slight channel activity is observed in response to noxiuos heat stimuli. This is Transient receptor potential cation channel subfamily V member 1 (Trpv1) from Rattus norvegicus (Rat).